The following is a 674-amino-acid chain: Secretin GspD (674 aa).

The N-terminal stretch at 1–24 (MKYWLKKSSWLLAGSLLSTPLAMA) is a signal peptide. Positions 25–121 (NEFSASFKGT…VLSGEERANG (97 aa)) are N0. An N1 region spans residues 123–187 (EVITQVVAVK…EIIRRVDQAG (65 aa)). The N2 stretch occupies residues 188–261 (DKEIEVVELN…LIKQLDVEMA (74 aa)). Residues 264 to 338 (GNNRVVYLKY…AMLEVIGQLD (75 aa)) form an N3 region. The interval 343–612 (QVLIEALIVE…VFIKPTIIRD (270 aa)) is secretin. Residues 395 to 417 (DTTQTKAVYDTNNNFLRNETTTT) form a cap gate region. The interval 614–674 (VTADGITQRK…AFIEQMEAKQ (61 aa)) is s domain.

It belongs to the bacterial secretin family. GSP D subfamily. In terms of assembly, forms a cylindrical channel with 15 subunits; unlike E.coli no 16-subunit channels are seen. The closed pentadeacameric channels are 195 Angstroms long and 145 Angstroms in diameter. Each subunit turns in a clock-wise manner around the channel.

Its subcellular location is the cell outer membrane. In terms of biological role, involved in a type II secretion system (T2SS, formerly general secretion pathway, GSP) for the export of proteins. Required for secretion of cholera toxin through the outer membrane. This subunit forms the outer membrane channel. The chain is Secretin GspD (epsD) from Vibrio cholerae serotype O1 (strain ATCC 39315 / El Tor Inaba N16961).